A 400-amino-acid polypeptide reads, in one-letter code: tRNA(Met) cytidine acetate ligase (400 aa).

Residues 7-20 (IVEYNPFHNGHQYH), G101, N162, and R187 contribute to the ATP site.

It belongs to the TmcAL family.

Its subcellular location is the cytoplasm. It catalyses the reaction cytidine(34) in elongator tRNA(Met) + acetate + ATP = N(4)-acetylcytidine(34) in elongator tRNA(Met) + AMP + diphosphate. Functionally, catalyzes the formation of N(4)-acetylcytidine (ac(4)C) at the wobble position of elongator tRNA(Met), using acetate and ATP as substrates. First activates an acetate ion to form acetyladenylate (Ac-AMP) and then transfers the acetyl group to tRNA to form ac(4)C34. The protein is tRNA(Met) cytidine acetate ligase of Oceanobacillus iheyensis (strain DSM 14371 / CIP 107618 / JCM 11309 / KCTC 3954 / HTE831).